The sequence spans 116 residues: Ferredoxin-like protein in nif region (116 aa).

Positions 2-29 constitute a 4Fe-4S ferredoxin-type domain; that stretch reads AYTITSQCISCKLCSSVCPTGAIKVAED. Cysteine 9, cysteine 12, cysteine 15, and cysteine 19 together coordinate iron-sulfur cluster.

The protein is Ferredoxin-like protein in nif region (fdxN) of Trichormus azollae (Anabaena azollae).